The chain runs to 68 residues: MFTMKKSLLLLFFLGTISLSLCEEERGADEEEGDGEKLTKRALSILRGLEKLAKMGIALTNCKATKKC.

The N-terminal stretch at 1-22 (MFTMKKSLLLLFFLGTISLSLC) is a signal peptide. A propeptide spanning residues 23-39 (EEERGADEEEGDGEKLT) is cleaved from the precursor. A disulfide bond links Cys-62 and Cys-68.

In terms of tissue distribution, expressed by the skin glands.

The protein localises to the secreted. Its function is as follows. Antimicrobial peptide. This is Palustrin-1c from Odorrana versabilis (Chinese bamboo leaf odorous frog).